Here is a 66-residue protein sequence, read N- to C-terminus: Photosystem II reaction center protein J (66 aa).

A helical transmembrane segment spans residues L37–Y57.

It belongs to the PsbJ family. In terms of assembly, PSII is composed of 1 copy each of membrane proteins PsbA, PsbB, PsbC, PsbD, PsbE, PsbF, PsbH, PsbI, PsbJ, PsbK, PsbL, PsbM, PsbT, PsbX, PsbY, PsbZ, Psb30/Ycf12, peripheral proteins PsbO, CyanoQ (PsbQ), PsbU, PsbV and a large number of cofactors. It forms dimeric complexes.

The protein resides in the cellular thylakoid membrane. Its function is as follows. One of the components of the core complex of photosystem II (PSII). PSII is a light-driven water:plastoquinone oxidoreductase that uses light energy to abstract electrons from H(2)O, generating O(2) and a proton gradient subsequently used for ATP formation. It consists of a core antenna complex that captures photons, and an electron transfer chain that converts photonic excitation into a charge separation. The sequence is that of Photosystem II reaction center protein J from Synechococcus sp. (strain CC9311).